We begin with the raw amino-acid sequence, 622 residues long: Chaperone protein HscA homolog (622 aa).

The protein belongs to the heat shock protein 70 family.

Functionally, chaperone involved in the maturation of iron-sulfur cluster-containing proteins. Has a low intrinsic ATPase activity which is markedly stimulated by HscB. The polypeptide is Chaperone protein HscA homolog (Pseudoalteromonas atlantica (strain T6c / ATCC BAA-1087)).